A 471-amino-acid polypeptide reads, in one-letter code: Sulfate adenylyltransferase subunit 1 (471 aa).

The 218-residue stretch at 22–239 (KDMLRFLTCG…NIEIGEDDNL (218 aa)) folds into the tr-type G domain. The segment at 31–38 (GSVDDGKS) is G1. 31-38 (GSVDDGKS) is a GTP binding site. Residues 89 to 93 (GITID) are G2. The tract at residues 110–113 (DTPG) is G3. GTP contacts are provided by residues 110-114 (DTPGH) and 165-168 (NKMD). The G4 stretch occupies residues 165 to 168 (NKMD). The interval 202-204 (SAL) is G5.

The protein belongs to the TRAFAC class translation factor GTPase superfamily. Classic translation factor GTPase family. CysN/NodQ subfamily. As to quaternary structure, heterodimer composed of CysD, the smaller subunit, and CysN.

It catalyses the reaction sulfate + ATP + H(+) = adenosine 5'-phosphosulfate + diphosphate. It participates in sulfur metabolism; hydrogen sulfide biosynthesis; sulfite from sulfate: step 1/3. Functionally, with CysD forms the ATP sulfurylase (ATPS) that catalyzes the adenylation of sulfate producing adenosine 5'-phosphosulfate (APS) and diphosphate, the first enzymatic step in sulfur assimilation pathway. APS synthesis involves the formation of a high-energy phosphoric-sulfuric acid anhydride bond driven by GTP hydrolysis by CysN coupled to ATP hydrolysis by CysD. The polypeptide is Sulfate adenylyltransferase subunit 1 (Alteromonas mediterranea (strain DSM 17117 / CIP 110805 / LMG 28347 / Deep ecotype)).